A 616-amino-acid polypeptide reads, in one-letter code: D-glucuronyl C5-epimerase (616 aa).

The Cytoplasmic segment spans residues 1-12; that stretch reads MKCLRWRSNRHR. Residues 13–29 form a helical; Signal-anchor for type II membrane protein membrane-spanning segment; the sequence is IYLLVACGALFLLNRHL. Topologically, residues 30–616 are extracellular; the sequence is TQEESRIDEE…YAYGKRAKHN (587 aa). Substrate is bound by residues tyrosine 136, 141-143, and glutamine 169; that span reads RDR. Residues asparagine 188, asparagine 232, asparagine 267, and asparagine 471 are each glycosylated (N-linked (GlcNAc...) asparagine). Substrate is bound by residues tyrosine 504, arginine 562, and 574–580; that span reads RWDYHAV.

The protein belongs to the D-glucuronyl C5-epimerase family. As to quaternary structure, homodimer. In terms of tissue distribution, expression in comma stage embryos is strong in the hypodermis and intestine and weaker in the head region. In late embryos, larval, and adult stages, expressed primarily in hypodermis and intestine.

It localises to the cell membrane. The protein localises to the secreted. Its subcellular location is the extracellular space. The protein resides in the extracellular matrix. It is found in the basement membrane. The enzyme catalyses [heparosan-N-sulfate](n) = [heparan-N-sulfate](n). Its pathway is glycan metabolism; heparan sulfate biosynthesis. It functions in the pathway glycan metabolism; heparin biosynthesis. In terms of biological role, converts D-glucuronic acid residues adjacent to N-sulfate sugar residues to L-iduronic acids. Plays a role in the early migration of AQR and PQR neurons, which descend from the Q neuroblasts. The polypeptide is D-glucuronyl C5-epimerase (hse-5) (Caenorhabditis elegans).